Reading from the N-terminus, the 305-residue chain is Ornithine carbamoyltransferase (305 aa).

Residues 50–53 (STRT), Q77, R101, and 128–131 (HPCQ) contribute to the carbamoyl phosphate site. Residues N159, D222, and 226 to 227 (SM) contribute to the L-ornithine site. Carbamoyl phosphate contacts are provided by residues 262-263 (CL) and R290.

This sequence belongs to the aspartate/ornithine carbamoyltransferase superfamily. OTCase family.

It is found in the cytoplasm. It carries out the reaction carbamoyl phosphate + L-ornithine = L-citrulline + phosphate + H(+). Its pathway is amino-acid biosynthesis; L-arginine biosynthesis; L-arginine from L-ornithine and carbamoyl phosphate: step 1/3. Functionally, reversibly catalyzes the transfer of the carbamoyl group from carbamoyl phosphate (CP) to the N(epsilon) atom of ornithine (ORN) to produce L-citrulline. In Synechococcus elongatus (strain ATCC 33912 / PCC 7942 / FACHB-805) (Anacystis nidulans R2), this protein is Ornithine carbamoyltransferase.